A 353-amino-acid polypeptide reads, in one-letter code: tRNA-splicing endonuclease (353 aa).

Catalysis depends on residues Y289, H300, and K331.

It belongs to the tRNA-intron endonuclease family. Archaeal long subfamily. Homodimer.

It catalyses the reaction pretRNA = a 3'-half-tRNA molecule with a 5'-OH end + a 5'-half-tRNA molecule with a 2',3'-cyclic phosphate end + an intron with a 2',3'-cyclic phosphate and a 5'-hydroxyl terminus.. Its function is as follows. Endonuclease that removes tRNA introns. Cleaves pre-tRNA at the 5'- and 3'-splice sites to release the intron. The products are an intron and two tRNA half-molecules bearing 2',3' cyclic phosphate and 5'-OH termini. Recognizes a pseudosymmetric substrate in which 2 bulged loops of 3 bases are separated by a stem of 4 bp. The sequence is that of tRNA-splicing endonuclease from Methanosarcina mazei (strain ATCC BAA-159 / DSM 3647 / Goe1 / Go1 / JCM 11833 / OCM 88) (Methanosarcina frisia).